The primary structure comprises 167 residues: Putative peroxiredoxin-A (167 aa).

The Thioredoxin domain maps to 4–167; the sequence is IKRGDRFPTT…STAQKIIAKL (164 aa). Catalysis depends on Cys53, which acts as the Cysteine sulfenic acid (-SOH) intermediate. Residues 165–167 carry the Microbody targeting signal motif; it reads AKL.

This sequence belongs to the peroxiredoxin family. Prx5 subfamily.

The protein resides in the peroxisome membrane. The enzyme catalyses a hydroperoxide + [thioredoxin]-dithiol = an alcohol + [thioredoxin]-disulfide + H2O. Thiol-specific peroxidase that catalyzes the reduction of hydrogen peroxide and organic hydroperoxides to water and alcohols, respectively. Plays a role in cell protection against oxidative stress by detoxifying peroxides and as sensor of hydrogen peroxide-mediated signaling events. This Candida boidinii (Yeast) protein is Putative peroxiredoxin-A (PMPA).